The chain runs to 944 residues: MTTNSKSLNLLQSLTCGICQNLFKDPNTLIPCGHAFCLDCLTTNASIKNCIQCKVEYTTYIPNHPLKQMIDCLDQSSNNNNSNNNSNGENTNNNNNIINNERSSFNGSNSNSIIGFIEGLSDSTSNGRRFSQQDGLRYSSGLLDGSNSGGSNNIRYCMEHYEHYYAFCNDCQAPVCPSCLLTTHNRHGMIPLTKDSIATKMKEYRDIVQSFKTKMSQYKDNITLYQKEIELLDSTFLQCKQSIQLMISNLHKVLKSRETYLLKEISSIHYASHMELTDRSSTLENEISEMEKLIGNGTDKFKDATEILNNQNLKFEFLEQFHHSRTQSKKNQNQDGLKPLFKTDLLFYKANNERVTEMINGTLGNISLLTFPLDDIGEVNIWDEPKENICIEKVRTNSNGIEEFEVKYGSLNKLIERLCLPNCYDDNYVNIFLLTYHSFCSSKKLLKKLIERFTIPEDLEAHGLTLASIHEIHMKIRSVLVKWINEYSPKFDQDTIHLFQNFNCRMQSEYTSIQEIENLLLNSNENSPSITSSQSLSSQSLYSQTNNNNNNNNNNSNNLQPTIQTNQTLSSNINNITISNLNNSNLTNNGTCKIQNSPPKNYQQSNYSSIFNGPSSSSSSSPSSPILSLNSLALINGNDNLVFESPLNSPRNNNNNNNNNSPRSSSFGASSALKFNSNNNSLNINSNMGGPYFPSPSSPTTNNIPNINHFSSRILSSSKNLEFNDIDEFEIAKQLTLIEFENFGRIKPIDLLTCVDLKHKTPHITNIMERFHNISTWVSTTIVRGENLKNRVKIVNKFIKIAEHLKNLNNFNSLTAILVAIQRSTVTKKDLVKQSVKIITDLEKLMSSDDSYSTYRTRLAQCSPPCVPYISIYLQDIMDLEKKNPSNIIVQTSSNKTQEFINFTRRSLISKVILDLASYQRFGYSTILPISNIQEYLNVHIDEL.

The RING-type zinc finger occupies 16–54 (CGICQNLFKDPNTLIPCGHAFCLDCLTTNASIKNCIQCK). Residues 80–102 (NNSNNNSNGENTNNNNNIINNER) are disordered. The B box-type zinc-finger motif lies at 152–192 (NNIRYCMEHYEHYYAFCNDCQAPVCPSCLLTTHNRHGMIPL). Residues C157, H160, C179, and H184 each contribute to the Zn(2+) site. Coiled coils occupy residues 200-234 (KMKE…LLDS) and 271-303 (ASHM…KFKD). Residues 402-528 (EEFEVKYGSL…LLLNSNENSP (127 aa)) form the N-terminal Ras-GEF domain. 3 disordered regions span residues 530 to 562 (ITSS…LQPT), 587 to 623 (TNNG…SSPS), and 644 to 670 (ESPL…FGAS). A compositionally biased stretch (polar residues) spans 590–604 (GTCKIQNSPPKNYQQ). 2 stretches are compositionally biased toward low complexity: residues 605–623 (SNYS…SSPS) and 648–670 (NSPR…FGAS). Residues 727 to 944 (DEFEIAKQLT…EYLNVHIDEL (218 aa)) form the Ras-GEF domain.

Its function is as follows. Promotes the exchange of Ras-bound GDP by GTP. The chain is Ras guanine nucleotide exchange factor O (gefO) from Dictyostelium discoideum (Social amoeba).